The chain runs to 166 residues: Large ribosomal subunit protein mL49 (166 aa).

The protein belongs to the mitochondrion-specific ribosomal protein mL49 family. As to quaternary structure, component of the mitochondrial ribosome large subunit (39S) which comprises a 16S rRNA and about 50 distinct proteins. Interacts with OXA1L.

The protein resides in the mitochondrion. The polypeptide is Large ribosomal subunit protein mL49 (MRPL49) (Bos taurus (Bovine)).